Consider the following 537-residue polypeptide: 2-succinyl-5-enolpyruvyl-6-hydroxy-3-cyclohexene-1-carboxylate synthase (537 aa).

It belongs to the TPP enzyme family. MenD subfamily. As to quaternary structure, homodimer. Mg(2+) is required as a cofactor. It depends on Mn(2+) as a cofactor. Thiamine diphosphate serves as cofactor.

The catalysed reaction is isochorismate + 2-oxoglutarate + H(+) = 5-enolpyruvoyl-6-hydroxy-2-succinyl-cyclohex-3-ene-1-carboxylate + CO2. Its pathway is quinol/quinone metabolism; 1,4-dihydroxy-2-naphthoate biosynthesis; 1,4-dihydroxy-2-naphthoate from chorismate: step 2/7. The protein operates within quinol/quinone metabolism; menaquinone biosynthesis. In terms of biological role, catalyzes the thiamine diphosphate-dependent decarboxylation of 2-oxoglutarate and the subsequent addition of the resulting succinic semialdehyde-thiamine pyrophosphate anion to isochorismate to yield 2-succinyl-5-enolpyruvyl-6-hydroxy-3-cyclohexene-1-carboxylate (SEPHCHC). The polypeptide is 2-succinyl-5-enolpyruvyl-6-hydroxy-3-cyclohexene-1-carboxylate synthase (Dechloromonas aromatica (strain RCB)).